A 99-amino-acid polypeptide reads, in one-letter code: Aspartyl/glutamyl-tRNA(Asn/Gln) amidotransferase subunit C (99 aa).

It belongs to the GatC family. Heterotrimer of A, B and C subunits.

The enzyme catalyses L-glutamyl-tRNA(Gln) + L-glutamine + ATP + H2O = L-glutaminyl-tRNA(Gln) + L-glutamate + ADP + phosphate + H(+). The catalysed reaction is L-aspartyl-tRNA(Asn) + L-glutamine + ATP + H2O = L-asparaginyl-tRNA(Asn) + L-glutamate + ADP + phosphate + 2 H(+). In terms of biological role, allows the formation of correctly charged Asn-tRNA(Asn) or Gln-tRNA(Gln) through the transamidation of misacylated Asp-tRNA(Asn) or Glu-tRNA(Gln) in organisms which lack either or both of asparaginyl-tRNA or glutaminyl-tRNA synthetases. The reaction takes place in the presence of glutamine and ATP through an activated phospho-Asp-tRNA(Asn) or phospho-Glu-tRNA(Gln). In Rhodococcus erythropolis (strain PR4 / NBRC 100887), this protein is Aspartyl/glutamyl-tRNA(Asn/Gln) amidotransferase subunit C.